The sequence spans 729 residues: DNA topoisomerase 3 (729 aa).

Residues K3–T136 enclose the Toprim domain. Residues E9 and D105 each contribute to the Mg(2+) site. The Topo IA-type catalytic domain occupies Y153 to V594. The interaction with DNA stretch occupies residues N187–Q192. Catalysis depends on Y310, which acts as the O-(5'-phospho-DNA)-tyrosine intermediate. The span at E686–E713 shows a compositional bias: basic and acidic residues. Residues E686 to F719 are disordered.

This sequence belongs to the type IA topoisomerase family. Mg(2+) serves as cofactor.

The catalysed reaction is ATP-independent breakage of single-stranded DNA, followed by passage and rejoining.. Functionally, releases the supercoiling and torsional tension of DNA, which is introduced during the DNA replication and transcription, by transiently cleaving and rejoining one strand of the DNA duplex. Introduces a single-strand break via transesterification at a target site in duplex DNA. The scissile phosphodiester is attacked by the catalytic tyrosine of the enzyme, resulting in the formation of a DNA-(5'-phosphotyrosyl)-enzyme intermediate and the expulsion of a 3'-OH DNA strand. The free DNA strand then undergoes passage around the unbroken strand, thus removing DNA supercoils. Finally, in the religation step, the DNA 3'-OH attacks the covalent intermediate to expel the active-site tyrosine and restore the DNA phosphodiester backbone. This Bacillus cereus (strain ATCC 14579 / DSM 31 / CCUG 7414 / JCM 2152 / NBRC 15305 / NCIMB 9373 / NCTC 2599 / NRRL B-3711) protein is DNA topoisomerase 3.